The following is a 225-amino-acid chain: MGFGDLKTPAGLQVLNDYLADKSYIEGYVPSQADVAVFEAVSGPPPADLCHALRWYNHIKSYEKEKASLPGVKKSLGKYGPSSVEDTTGSGAADAKDDDDIDLFGSDDEEESEEAKKLREERLAQYESKKAKKPAVVAKSSILLDVKPWDDETDMTKLEECVRSIQADGLVWGSSKLVPVGYGIKKLQIQCVVEDDKVGTDMLEEQITAFEDYVQSMDVAAFNKI.

The GST C-terminal domain maps to 2 to 90 (GFGDLKTPAG…PSSVEDTTGS (89 aa)). The residue at position 7 (Lys7) is an N6-acetyllysine. Phosphoserine is present on residues Ser42 and Ser83. Positions 73–115 (KKSLGKYGPSSVEDTTGSGAADAKDDDDIDLFGSDDEEESEEA) are disordered. The residue at position 88 (Thr88) is a Phosphothreonine. The segment covering 96–113 (KDDDDIDLFGSDDEEESE) has biased composition (acidic residues). At Ser106 the chain carries Phosphoserine. Lys147 participates in a covalent cross-link: Glycyl lysine isopeptide (Lys-Gly) (interchain with G-Cter in SUMO2). The residue at position 174 (Ser174) is a Phosphoserine.

Belongs to the EF-1-beta/EF-1-delta family. EF-1 is composed of 4 subunits: alpha, beta (alpha subunit of the eEF1B subcomplex), delta (beta subunit of the eEF1B subcomplex), and gamma (gamma subunit of the eEF1B subcomplex). Interacts with elongation factor EEF1A1. Phosphorylation affects the GDP/GTP exchange rate.

Its function is as follows. Catalytic subunit of the guanine nucleotide exchange factor (GEF) (eEF1B subcomplex) of the eukaryotic elongation factor 1 complex (eEF1). Stimulates the exchange of GDP for GTP on elongation factor 1A (eEF1A), probably by displacing GDP from the nucleotide binding pocket in eEF1A. This Mus musculus (Mouse) protein is Elongation factor 1-beta (Eef1b).